We begin with the raw amino-acid sequence, 124 residues long: Ribonuclease pancreatic (124 aa).

The span at 1–13 shows a compositional bias: basic and acidic residues; the sequence is KETAAEKFQRQHM. The disordered stretch occupies residues 1 to 21; sequence KETAAEKFQRQHMDTSSSLSN. Residues Lys7 and Arg10 each coordinate substrate. His12 serves as the catalytic Proton acceptor. Disulfide bonds link Cys26/Cys84, Cys40/Cys95, Cys58/Cys110, and Cys65/Cys72. Asn34 carries an N-linked (GlcNAc...) asparagine glycan. Residues 41–45, Lys66, and Arg85 each bind substrate; that span reads KPVNT. Catalysis depends on His119, which acts as the Proton donor.

The protein belongs to the pancreatic ribonuclease family. Monomer. Interacts with and forms tight 1:1 complexes with RNH1. Dimerization of two such complexes may occur. Interaction with RNH1 inhibits this protein. Pancreas.

The protein resides in the secreted. The catalysed reaction is an [RNA] containing cytidine + H2O = an [RNA]-3'-cytidine-3'-phosphate + a 5'-hydroxy-ribonucleotide-3'-[RNA].. The enzyme catalyses an [RNA] containing uridine + H2O = an [RNA]-3'-uridine-3'-phosphate + a 5'-hydroxy-ribonucleotide-3'-[RNA].. Its function is as follows. Endonuclease that catalyzes the cleavage of RNA on the 3' side of pyrimidine nucleotides. Acts on single-stranded and double-stranded RNA. This chain is Ribonuclease pancreatic (RNASE1), found in Hippopotamus amphibius (Hippopotamus).